Reading from the N-terminus, the 92-residue chain is Protein S100-A5 (92 aa).

EF-hand domains follow at residues 12 to 47 and 47 to 82; these read MVTT…LGEM and MKES…LCMA. Ca(2+) is bound by residues Thr-28, Glu-33, Asp-60, Asn-62, Asp-64, Glu-66, and Glu-71.

The protein belongs to the S-100 family. Homodimer.

Binds calcium, zinc and copper. One subunit can simultaneously bind 2 calcium ions or 2 copper ions plus 1 zinc ion. Calcium and copper ions compete for the same binding sites. The polypeptide is Protein S100-A5 (S100A5) (Homo sapiens (Human)).